Here is a 433-residue protein sequence, read N- to C-terminus: Succinate--CoA ligase [GDP-forming] subunit beta, mitochondrial (433 aa).

Residues 1–38 constitute a mitochondrion transit peptide; that stretch reads IPAAPVAAQARKLLRDLAFRPPLLAARSQVVQLTPRRW. Positions 47–275 constitute an ATP-grasp domain; it reads KKLMSDNGVK…NAEFRQKDIF (229 aa). Glutamine 58 provides a ligand contact to GTP. An N6-acetyllysine modification is found at lysine 74. Lysine 79 carries the post-translational modification N6-succinyllysine. 91–93 contributes to the GTP binding site; sequence GRG. 2 positions are modified to N6-acetyllysine: lysine 133 and lysine 140. Leucine 147 contacts GTP. Residue serine 162 is modified to Phosphoserine. N6-acetyllysine occurs at positions 201 and 228. 2 residues coordinate Mg(2+): asparagine 244 and aspartate 258. 2 positions are modified to N6-acetyllysine: lysine 272 and lysine 292. Asparagine 309 lines the substrate pocket. At lysine 339 the chain carries N6-succinyllysine. Lysine 348 bears the N6-acetyllysine mark. Residue 366 to 368 coordinates substrate; it reads GIV. An N6-acetyllysine mark is found at lysine 387 and lysine 424.

It belongs to the succinate/malate CoA ligase beta subunit family. GTP-specific subunit beta subfamily. As to quaternary structure, heterodimer of an alpha and a beta subunit. The beta subunit determines specificity for GTP. Requires Mg(2+) as cofactor.

It localises to the mitochondrion. The enzyme catalyses GTP + succinate + CoA = succinyl-CoA + GDP + phosphate. It participates in carbohydrate metabolism; tricarboxylic acid cycle; succinate from succinyl-CoA (ligase route): step 1/1. Its function is as follows. GTP-specific succinyl-CoA synthetase functions in the citric acid cycle (TCA), coupling the hydrolysis of succinyl-CoA to the synthesis of GTP and thus represents the only step of substrate-level phosphorylation in the TCA. The beta subunit provides nucleotide specificity of the enzyme and binds the substrate succinate, while the binding sites for coenzyme A and phosphate are found in the alpha subunit. The protein is Succinate--CoA ligase [GDP-forming] subunit beta, mitochondrial of Sus scrofa (Pig).